The chain runs to 175 residues: Nucleoside-triphosphatase THEP1 (175 aa).

ATP-binding positions include 16–23 (GMPGVGKT) and 103–110 (VAFIDEIG).

The protein belongs to the THEP1 NTPase family.

It carries out the reaction a ribonucleoside 5'-triphosphate + H2O = a ribonucleoside 5'-diphosphate + phosphate + H(+). In terms of biological role, has nucleotide phosphatase activity towards ATP, GTP, CTP, TTP and UTP. May hydrolyze nucleoside diphosphates with lower efficiency. This chain is Nucleoside-triphosphatase THEP1, found in Pyrobaculum calidifontis (strain DSM 21063 / JCM 11548 / VA1).